A 338-amino-acid chain; its full sequence is Cytoskeleton protein RodZ (338 aa).

The Cytoplasmic portion of the chain corresponds to 1–111 (MNTEASQDQT…LGKKHKKRDG (111 aa)). An HTH cro/C1-type domain is found at 19–79 (LRQAREALGL…KLVHLPEDEL (61 aa)). Positions 30-49 (QQMVAERLCLKVSTIRDIEE) form a DNA-binding region, H-T-H motif. A helical; Signal-anchor for type II membrane protein membrane pass occupies residues 112–132 (WLMSFTWLIVLVVLGLTGAWW). At 133 to 338 (WQNHQAQQAE…RVARLTVGVE (206 aa)) the chain is on the periplasmic side. Polar residues-rich tracts occupy residues 151 to 163 (SAQL…QSVP) and 180 to 195 (PVAN…NGTV). A disordered region spans residues 151–253 (SAQLSQNGGQ…LPTADAGVTG (103 aa)). Low complexity predominate over residues 196-209 (PATSSAAPADTANN). Positions 210–241 (GVNTTAPQGTTSAESAVVSPSQAPLPSVSTAQ) are enriched in polar residues.

Belongs to the RodZ family.

Its subcellular location is the cell inner membrane. In terms of biological role, cytoskeletal protein that is involved in cell-shape control through regulation of the length of the long axis. The sequence is that of Cytoskeleton protein RodZ from Yersinia enterocolitica serotype O:8 / biotype 1B (strain NCTC 13174 / 8081).